A 448-amino-acid chain; its full sequence is N-succinylarginine dihydrolase (448 aa).

Residues 19–28, Asn110, and 137–138 each bind substrate; these read GGLSYGNVAS and HR. Glu174 is a catalytic residue. Residue Arg214 participates in substrate binding. Residue His250 is part of the active site. Positions 252 and 365 each coordinate substrate. Cys371 serves as the catalytic Nucleophile.

Belongs to the succinylarginine dihydrolase family. In terms of assembly, homodimer.

It carries out the reaction N(2)-succinyl-L-arginine + 2 H2O + 2 H(+) = N(2)-succinyl-L-ornithine + 2 NH4(+) + CO2. It functions in the pathway amino-acid degradation; L-arginine degradation via AST pathway; L-glutamate and succinate from L-arginine: step 2/5. In terms of biological role, catalyzes the hydrolysis of N(2)-succinylarginine into N(2)-succinylornithine, ammonia and CO(2). In Pseudomonas paraeruginosa (strain DSM 24068 / PA7) (Pseudomonas aeruginosa (strain PA7)), this protein is N-succinylarginine dihydrolase.